Consider the following 566-residue polypeptide: NAD-dependent malic enzyme (566 aa).

Tyr105 (proton donor) is an active-site residue. Arg158 contributes to the NAD(+) binding site. Lys176 (proton acceptor) is an active-site residue. 3 residues coordinate a divalent metal cation: Glu247, Asp248, and Asp271. Residues Asp271 and Asn419 each contribute to the NAD(+) site.

Belongs to the malic enzymes family. As to quaternary structure, homotetramer. It depends on Mg(2+) as a cofactor. The cofactor is Mn(2+).

It carries out the reaction (S)-malate + NAD(+) = pyruvate + CO2 + NADH. It catalyses the reaction oxaloacetate + H(+) = pyruvate + CO2. This is NAD-dependent malic enzyme from Acinetobacter baylyi (strain ATCC 33305 / BD413 / ADP1).